The following is a 343-amino-acid chain: Arginine-hydroxylase NDUFAF5, mitochondrial (343 aa).

A mitochondrion-targeting transit peptide spans 1 to 29 (MLRKVVLLRLCPLLGRPAVSASSGSRREV).

It belongs to the methyltransferase superfamily. As to quaternary structure, interacts with NDUFAF8, leading to stabilize NDUFAF5. Interacts with NDUFS7. Interacts with PYURF (via TRM112 domain); the interaction is direct and stabilizes NDUFAF5 protein.

The protein resides in the mitochondrion inner membrane. Its function is as follows. Arginine hydroxylase that mediates hydroxylation of 'Arg-122' of NDUFS7 and is involved in the assembly of mitochondrial NADH:ubiquinone oxidoreductase complex (complex I, MT-ND1) at early stages. May also have methyltransferase activity. This is Arginine-hydroxylase NDUFAF5, mitochondrial from Mus musculus (Mouse).